Here is a 1528-residue protein sequence, read N- to C-terminus: Rho GTPase-activating protein 7 (1528 aa).

Disordered regions lie at residues 72–94 (DFPGRPMGHLSKDVDENDSHEGE), 288–310 (MSAENGLEKSGFSQHQNKSPPKV), and 372–436 (ALST…TKPK). A compositionally biased stretch (basic and acidic residues) spans 81–94 (LSKDVDENDSHEGE). Residues 374–384 (STSSSPSGTPT) show a composition bias toward low complexity. The span at 396 to 436 (GSESGADTISVNQTRVNLSSDTESTDLPSSTPVANSGTKPK) shows a compositional bias: polar residues. The SAM domain occupies 448–515 (KAEIEAKEAC…LNKCAVMKLE (68 aa)). Phosphoserine is present on residues serine 523, serine 526, and serine 566. 4 disordered regions span residues 558-617 (PKQD…ATPR), 732-764 (RSVSNSTQTSSSSSQSETSSAVSTPSPVTRTRS), 829-876 (PSGN…SSRL), and 928-990 (SDEG…GVGA). Composition is skewed to low complexity over residues 591–605 (VSSVRSLSSTGSLPS) and 734–760 (VSNSTQTSSSSSQSETSSAVSTPSPVT). The interval 710-884 (QLNCVEISAL…RLSIYDNVPG (175 aa)) is focal adhesion-targeting (FAT). Serine 757 is modified (phosphoserine). Residues 851–862 (LRRENSSDSPKE) are compositionally biased toward basic and acidic residues. Residues 936–948 (ALDSVSPCPSSPK) are compositionally biased toward polar residues. Residues 950–960 (IHLDVDNDRTT) are compositionally biased toward basic and acidic residues. Residues 961–972 (PSDLDSTGNSLN) show a composition bias toward polar residues. The tract at residues 1051–1073 (KHGFSWAVPKFMKRIKVPDYKDR) is polybasic cluster (PBR). A Rho-GAP domain is found at 1078-1284 (VPLTVNVQRT…HMIAECKKLF (207 aa)). An START domain is found at 1314-1521 (GNDDSADYQH…RDSFSNQNTE (208 aa)).

In terms of assembly, interacts with EF1A1, facilitates EF1A1 distribution to the membrane periphery and ruffles upon growth factor stimulation and suppresses cell migration. Interacts with tensin TNS1 (via N-terminus); the interaction is decreased by phosphorylation of TNS1. Interacts with TNS3 and PTEN; in resting cells, interacts with TNS3 (via C2 tensin-type domain) but, following growth factor stimulation, TNS3 and PTEN are phosphorylated which leads to weakened interaction with TNS3 and enhanced interaction with PTEN. Interacts (via C-terminus) with tensin TNS4 (via SH2 domain); the interaction is independent of tyrosine phosphorylation of DLC1. In terms of tissue distribution, highest level of expression in the spleen, with rather lower levels in prostate, testis, ovary, small intestine and colon, but none in the thymus.

It is found in the cytoplasm. The protein resides in the cell junction. It localises to the focal adhesion. The protein localises to the membrane. Its function is as follows. Functions as a GTPase-activating protein for the small GTPases RHOA, RHOB, RHOC and CDC42, terminating their downstream signaling. This induces morphological changes and detachment through cytoskeletal reorganization, playing a critical role in biological processes such as cell migration and proliferation. Also functions in vivo as an activator of the phospholipase PLCD1. Active DLC1 increases cell migration velocity but reduces directionality. Required for growth factor-induced epithelial cell migration; in resting cells, interacts with TNS3 while PTEN interacts with the p85 regulatory subunit of the PI3K kinase complex but growth factor stimulation induces phosphorylation of TNS3 and PTEN, causing them to change their binding preference so that PTEN interacts with DLC1 and TNS3 interacts with p85. The PTEN-DLC1 complex translocates to the posterior of migrating cells to activate RHOA while the TNS3-p85 complex translocates to the leading edge of migrating cells to promote RAC1 activation. The chain is Rho GTPase-activating protein 7 (DLC1) from Homo sapiens (Human).